Consider the following 645-residue polypeptide: ATP-dependent zinc metalloprotease FtsH 3 (645 aa).

Residues 1 to 11 (MQNKRNQSRVL) are Cytoplasmic-facing. Residues 12-32 (WLLLIYITIGIFIYVGVNSLI) form a helical membrane-spanning segment. Residues 33 to 110 (GTPDVSKIEY…YVRSLENSWW (78 aa)) are Periplasmic-facing. Residues 111–131 (ISILTFLLPVFLLIFLFTFLF) form a helical membrane-spanning segment. Residues 132–645 (RSSGGGANQG…ENNLIERKGI (514 aa)) lie on the Cytoplasmic side of the membrane. 202-209 (GEPGTGKT) contacts ATP. Histidine 424 is a binding site for Zn(2+). Residue glutamate 425 is part of the active site. The Zn(2+) site is built by histidine 428 and aspartate 501.

The protein in the central section; belongs to the AAA ATPase family. In the C-terminal section; belongs to the peptidase M41 family. Homohexamer. Zn(2+) is required as a cofactor.

It localises to the cell inner membrane. Its function is as follows. Acts as a processive, ATP-dependent zinc metallopeptidase for both cytoplasmic and membrane proteins. Plays a role in the quality control of integral membrane proteins. The protein is ATP-dependent zinc metalloprotease FtsH 3 of Petrotoga mobilis (strain DSM 10674 / SJ95).